A 349-amino-acid chain; its full sequence is METNFSIPLNETEEVLPEPAGHTVLWIFSLLVHGVTFVFGVLGNGLVIWVAGFRMTRTVNTICYLNLALADFSFSAILPFRMVSVAMREKWPFGSFLCKLVHVMIDINLFVSVYLITIIALDRCICVLHPAWAQNHRTMSLAKRVMTGLWILTIVLTLPNFIFWTTIRTTNGDTYCIFNFAFWGDTAVERLNVFITMAKVFLILHFIIGFSMPMSIITVCYGIIAAKIHRNHMIKSSRPLRVFAAVVASFFICWFPYELIGILMAVWLKEMLLNGKYKIILVLINPTSSLAFFNSCLNPILYVFMGRNFQERLIRSLPTSLERALTEVPDSAQTSNTHTTSASPPEETE.

Residues 1–27 (METNFSIPLNETEEVLPEPAGHTVLWI) are Extracellular-facing. Asparagine 4 and asparagine 10 each carry an N-linked (GlcNAc...) asparagine glycan. Residues 28–50 (FSLLVHGVTFVFGVLGNGLVIWV) traverse the membrane as a helical segment. Topologically, residues 51 to 61 (AGFRMTRTVNT) are cytoplasmic. The helical transmembrane segment at 62 to 83 (ICYLNLALADFSFSAILPFRMV) threads the bilayer. Residues 84–100 (SVAMREKWPFGSFLCKL) are Extracellular-facing. An intrachain disulfide couples cysteine 98 to cysteine 176. Residues 101-121 (VHVMIDINLFVSVYLITIIAL) traverse the membrane as a helical segment. At 122 to 140 (DRCICVLHPAWAQNHRTMS) the chain is on the cytoplasmic side. The helical transmembrane segment at 141-162 (LAKRVMTGLWILTIVLTLPNFI) threads the bilayer. Residues 163–205 (FWTTIRTTNGDTYCIFNFAFWGDTAVERLNVFITMAKVFLILH) are Extracellular-facing. Residues 206 to 226 (FIIGFSMPMSIITVCYGIIAA) form a helical membrane-spanning segment. Topologically, residues 227–242 (KIHRNHMIKSSRPLRV) are cytoplasmic. A helical transmembrane segment spans residues 243–266 (FAAVVASFFICWFPYELIGILMAV). The Extracellular portion of the chain corresponds to 267–286 (WLKEMLLNGKYKIILVLINP). Residues 287-306 (TSSLAFFNSCLNPILYVFMG) traverse the membrane as a helical segment. The Cytoplasmic portion of the chain corresponds to 307–349 (RNFQERLIRSLPTSLERALTEVPDSAQTSNTHTTSASPPEETE). A disordered region spans residues 327-349 (EVPDSAQTSNTHTTSASPPEETE). A compositionally biased stretch (polar residues) spans 331–343 (SAQTSNTHTTSAS).

It belongs to the G-protein coupled receptor 1 family.

The protein resides in the cell membrane. In terms of biological role, low affinity receptor for N-formyl-methionyl peptides, which are powerful neutrophils chemotactic factors. Binding of FMLP to the receptor causes activation of neutrophils. This response is mediated via a G-protein that activates a phosphatidylinositol-calcium second messenger system. The chain is N-formyl peptide receptor 3 (FPR3) from Pan troglodytes (Chimpanzee).